The chain runs to 1220 residues: DNA-directed RNA polymerase subunit beta (1220 aa).

This sequence belongs to the RNA polymerase beta chain family. The RNAP catalytic core consists of 2 alpha, 1 beta, 1 beta' and 1 omega subunit. When a sigma factor is associated with the core the holoenzyme is formed, which can initiate transcription.

The enzyme catalyses RNA(n) + a ribonucleoside 5'-triphosphate = RNA(n+1) + diphosphate. In terms of biological role, DNA-dependent RNA polymerase catalyzes the transcription of DNA into RNA using the four ribonucleoside triphosphates as substrates. In Mesomycoplasma hyopneumoniae (strain 7448) (Mycoplasma hyopneumoniae), this protein is DNA-directed RNA polymerase subunit beta.